A 208-amino-acid polypeptide reads, in one-letter code: Uracil phosphoribosyltransferase (208 aa).

Residues R78, R103, and 130-138 each bind 5-phospho-alpha-D-ribose 1-diphosphate; that span reads DPMLATGGS. Uracil-binding positions include I193 and 198–200; that span reads GDA. Position 199 (D199) interacts with 5-phospho-alpha-D-ribose 1-diphosphate.

Belongs to the UPRTase family. Mg(2+) serves as cofactor.

The catalysed reaction is UMP + diphosphate = 5-phospho-alpha-D-ribose 1-diphosphate + uracil. It participates in pyrimidine metabolism; UMP biosynthesis via salvage pathway; UMP from uracil: step 1/1. Its activity is regulated as follows. Allosterically activated by GTP. Its function is as follows. Catalyzes the conversion of uracil and 5-phospho-alpha-D-ribose 1-diphosphate (PRPP) to UMP and diphosphate. In Acholeplasma laidlawii (strain PG-8A), this protein is Uracil phosphoribosyltransferase.